We begin with the raw amino-acid sequence, 245 residues long: Tetraspanin-16 (245 aa).

Over 1 to 13 (MAEIHTPYSSLKK) the chain is Cytoplasmic. Residues 14–34 (LLSLLNGFVAVSGIILVGLGI) traverse the membrane as a helical segment. At 35 to 37 (GGK) the chain is on the extracellular side. A helical transmembrane segment spans residues 38 to 58 (CGGASLTNVLGLSSAYLLHVG). Residue Asn59 is a topological domain, cytoplasmic. Residues 60–80 (LCLVMGCITVLLGCAGWYGAT) form a helical membrane-spanning segment. The Extracellular portion of the chain corresponds to 81–94 (KESRGTLLFCILSM). The helical transmembrane segment at 95–115 (VIVLIMEVTAATVVLLFFPIV) threads the bilayer. Residues 116-245 (GDVALEHTFV…VAQAGLELLA (130 aa)) lie on the Cytoplasmic side of the membrane.

Belongs to the tetraspanin (TM4SF) family. As to expression, broadly expressed in most human tissues and cell lines including neural and bone marrow derived tissues.

Its subcellular location is the membrane. This chain is Tetraspanin-16 (TSPAN16), found in Homo sapiens (Human).